The primary structure comprises 196 residues: Peroxynitrite isomerase (196 aa).

The disordered stretch occupies residues 1–29 (MSDENPLQPPWLNAPPVDPYPYEESHDLR). Residues 7 to 19 (LQPPWLNAPPVDP) show a composition bias toward pro residues. Residues 46–52 (GVWRGRG) carry the GXWXGXG motif. Heme b is bound at residue histidine 186.

This sequence belongs to the nitrobindin family. Homodimer. The cofactor is heme b.

It catalyses the reaction peroxynitrite = nitrate. It participates in nitrogen metabolism. Functionally, heme-binding protein able to scavenge peroxynitrite and to protect free L-tyrosine against peroxynitrite-mediated nitration, by acting as a peroxynitrite isomerase that converts peroxynitrite to nitrate. Therefore, this protein likely plays a role in peroxynitrite sensing and in the detoxification of reactive nitrogen and oxygen species (RNS and ROS, respectively). Is able to bind nitric oxide (NO) in vitro, but may act as a sensor of peroxynitrite levels in vivo. In Salinispora arenicola (strain CNS-205), this protein is Peroxynitrite isomerase.